We begin with the raw amino-acid sequence, 211 residues long: Thiamine-phosphate synthase (211 aa).

4-amino-2-methyl-5-(diphosphooxymethyl)pyrimidine contacts are provided by residues 37–41 (QLRIK) and asparagine 69. Mg(2+) is bound by residues aspartate 70 and aspartate 89. Serine 108 provides a ligand contact to 4-amino-2-methyl-5-(diphosphooxymethyl)pyrimidine. 134–136 (TQT) serves as a coordination point for 2-[(2R,5Z)-2-carboxy-4-methylthiazol-5(2H)-ylidene]ethyl phosphate. Lysine 137 contributes to the 4-amino-2-methyl-5-(diphosphooxymethyl)pyrimidine binding site. 2-[(2R,5Z)-2-carboxy-4-methylthiazol-5(2H)-ylidene]ethyl phosphate-binding positions include glycine 166 and 186-187 (VS).

It belongs to the thiamine-phosphate synthase family. The cofactor is Mg(2+).

It carries out the reaction 2-[(2R,5Z)-2-carboxy-4-methylthiazol-5(2H)-ylidene]ethyl phosphate + 4-amino-2-methyl-5-(diphosphooxymethyl)pyrimidine + 2 H(+) = thiamine phosphate + CO2 + diphosphate. The enzyme catalyses 2-(2-carboxy-4-methylthiazol-5-yl)ethyl phosphate + 4-amino-2-methyl-5-(diphosphooxymethyl)pyrimidine + 2 H(+) = thiamine phosphate + CO2 + diphosphate. The catalysed reaction is 4-methyl-5-(2-phosphooxyethyl)-thiazole + 4-amino-2-methyl-5-(diphosphooxymethyl)pyrimidine + H(+) = thiamine phosphate + diphosphate. Its pathway is cofactor biosynthesis; thiamine diphosphate biosynthesis; thiamine phosphate from 4-amino-2-methyl-5-diphosphomethylpyrimidine and 4-methyl-5-(2-phosphoethyl)-thiazole: step 1/1. Condenses 4-methyl-5-(beta-hydroxyethyl)thiazole monophosphate (THZ-P) and 2-methyl-4-amino-5-hydroxymethyl pyrimidine pyrophosphate (HMP-PP) to form thiamine monophosphate (TMP). The protein is Thiamine-phosphate synthase of Salmonella dublin (strain CT_02021853).